We begin with the raw amino-acid sequence, 180 residues long: MTLKELLVGFGTQVRSIWMIGLHAFAKRETRMYPEEPVYLPPRYRGRIVLTRDPDGEERCVACNLCAVACPVGCISLQKTETKDGRWYPEFFRINFSRCIFCGLCEEACPTTAIQLTPDFEMGEYKRQDLVYEKEDLLISGPGKYPEYNFYRMAGMAIDGKDKGEAENEAKPIDVKSLLP.

4Fe-4S ferredoxin-type domains lie at Leu50 to Thr80 and Glu90 to Asp119. [4Fe-4S] cluster is bound by residues Cys60, Cys63, Cys66, Cys70, Cys99, Cys102, Cys105, and Cys109.

This sequence belongs to the complex I 23 kDa subunit family. As to quaternary structure, NDH-1 is composed of 13 different subunits. Subunits NuoA, H, J, K, L, M, N constitute the membrane sector of the complex. [4Fe-4S] cluster serves as cofactor.

It is found in the cell inner membrane. It carries out the reaction a quinone + NADH + 5 H(+)(in) = a quinol + NAD(+) + 4 H(+)(out). Functionally, NDH-1 shuttles electrons from NADH, via FMN and iron-sulfur (Fe-S) centers, to quinones in the respiratory chain. The immediate electron acceptor for the enzyme in this species is believed to be ubiquinone. Couples the redox reaction to proton translocation (for every two electrons transferred, four hydrogen ions are translocated across the cytoplasmic membrane), and thus conserves the redox energy in a proton gradient. The sequence is that of NADH-quinone oxidoreductase subunit I from Shigella dysenteriae serotype 1 (strain Sd197).